A 237-amino-acid polypeptide reads, in one-letter code: tRNA1(Val) (adenine(37)-N6)-methyltransferase (237 aa).

The protein belongs to the methyltransferase superfamily. tRNA (adenine-N(6)-)-methyltransferase family.

It is found in the cytoplasm. The enzyme catalyses adenosine(37) in tRNA1(Val) + S-adenosyl-L-methionine = N(6)-methyladenosine(37) in tRNA1(Val) + S-adenosyl-L-homocysteine + H(+). In terms of biological role, specifically methylates the adenine in position 37 of tRNA(1)(Val) (anticodon cmo5UAC). In Bacteroides thetaiotaomicron (strain ATCC 29148 / DSM 2079 / JCM 5827 / CCUG 10774 / NCTC 10582 / VPI-5482 / E50), this protein is tRNA1(Val) (adenine(37)-N6)-methyltransferase.